A 265-amino-acid polypeptide reads, in one-letter code: UPF0354 protein BH3252 (265 aa).

It belongs to the UPF0354 family.

In Halalkalibacterium halodurans (strain ATCC BAA-125 / DSM 18197 / FERM 7344 / JCM 9153 / C-125) (Bacillus halodurans), this protein is UPF0354 protein BH3252.